Reading from the N-terminus, the 502-residue chain is ATP synthase subunit alpha, chloroplastic (502 aa).

170-177 contacts ATP; that stretch reads GDRQTGKT.

The protein belongs to the ATPase alpha/beta chains family. In terms of assembly, F-type ATPases have 2 components, CF(1) - the catalytic core - and CF(0) - the membrane proton channel. CF(1) has five subunits: alpha(3), beta(3), gamma(1), delta(1), epsilon(1). CF(0) has four main subunits: a, b, b' and c.

Its subcellular location is the plastid. It is found in the chloroplast thylakoid membrane. The catalysed reaction is ATP + H2O + 4 H(+)(in) = ADP + phosphate + 5 H(+)(out). Produces ATP from ADP in the presence of a proton gradient across the membrane. The alpha chain is a regulatory subunit. This is ATP synthase subunit alpha, chloroplastic from Tupiella akineta (Green alga).